The primary structure comprises 147 residues: NADH-quinone oxidoreductase subunit A (147 aa).

Transmembrane regions (helical) follow at residues 11–31 (IWPL…VMAL), 68–88 (LIAV…AWAV), and 93–113 (LGWP…AALA).

Belongs to the complex I subunit 3 family. NDH-1 is composed of 14 different subunits. Subunits NuoA, H, J, K, L, M, N constitute the membrane sector of the complex.

It is found in the cell inner membrane. It carries out the reaction a quinone + NADH + 5 H(+)(in) = a quinol + NAD(+) + 4 H(+)(out). Functionally, NDH-1 shuttles electrons from NADH, via FMN and iron-sulfur (Fe-S) centers, to quinones in the respiratory chain. The immediate electron acceptor for the enzyme in this species is believed to be ubiquinone. Couples the redox reaction to proton translocation (for every two electrons transferred, four hydrogen ions are translocated across the cytoplasmic membrane), and thus conserves the redox energy in a proton gradient. In Nitrosospira multiformis (strain ATCC 25196 / NCIMB 11849 / C 71), this protein is NADH-quinone oxidoreductase subunit A.